The chain runs to 494 residues: Protein nucleotidyltransferase YdiU (494 aa).

Positions 101, 103, 104, 123, 135, 136, 186, and 193 each coordinate ATP. Asp262 acts as the Proton acceptor in catalysis. Residues Asn263 and Asp272 each coordinate Mg(2+). An ATP-binding site is contributed by Asp272.

It belongs to the SELO family. The cofactor is Mg(2+). Mn(2+) serves as cofactor.

The catalysed reaction is L-seryl-[protein] + ATP = 3-O-(5'-adenylyl)-L-seryl-[protein] + diphosphate. It catalyses the reaction L-threonyl-[protein] + ATP = 3-O-(5'-adenylyl)-L-threonyl-[protein] + diphosphate. It carries out the reaction L-tyrosyl-[protein] + ATP = O-(5'-adenylyl)-L-tyrosyl-[protein] + diphosphate. The enzyme catalyses L-histidyl-[protein] + UTP = N(tele)-(5'-uridylyl)-L-histidyl-[protein] + diphosphate. The catalysed reaction is L-seryl-[protein] + UTP = O-(5'-uridylyl)-L-seryl-[protein] + diphosphate. It catalyses the reaction L-tyrosyl-[protein] + UTP = O-(5'-uridylyl)-L-tyrosyl-[protein] + diphosphate. Functionally, nucleotidyltransferase involved in the post-translational modification of proteins. It can catalyze the addition of adenosine monophosphate (AMP) or uridine monophosphate (UMP) to a protein, resulting in modifications known as AMPylation and UMPylation. The sequence is that of Protein nucleotidyltransferase YdiU from Chromohalobacter salexigens (strain ATCC BAA-138 / DSM 3043 / CIP 106854 / NCIMB 13768 / 1H11).